The primary structure comprises 475 residues: Trifunctional enzyme subunit beta, mitochondrial (475 aa).

The N-terminal 34 residues, 1-34 (MTTILTSTFRNLSTTSKWALRSSIRPLSCSSQLH), are a transit peptide targeting the mitochondrion. Lysine 53 is subject to N6-succinyllysine. The residue at position 73 (lysine 73) is an N6-acetyllysine; alternate. Lysine 73 is subject to N6-succinyllysine; alternate. Cysteine 139 (acyl-thioester intermediate) is an active-site residue. An intramembrane segment occupies 174–221 (IRHSRNMRKMMLDLNKAKTLGQRLSLLSKFRLNFLSPELPAVAEFSTN). The residue at position 189 (lysine 189) is an N6-acetyllysine; alternate. Lysine 189 carries the N6-succinyllysine; alternate modification. Lysine 191, lysine 273, and lysine 292 each carry N6-succinyllysine. N6-acetyllysine; alternate is present on lysine 294. Position 294 is an N6-succinyllysine; alternate (lysine 294). The residue at position 299 (lysine 299) is an N6-acetyllysine. The residue at position 333 (lysine 333) is an N6-acetyllysine; alternate. An N6-succinyllysine; alternate modification is found at lysine 333. Lysine 349 and lysine 362 each carry N6-acetyllysine. The Proton donor/acceptor role is filled by cysteine 459.

It belongs to the thiolase-like superfamily. Thiolase family. Heterotetramer of 2 alpha/HADHA and 2 beta/HADHB subunits; forms the mitochondrial trifunctional enzyme. Also purified as higher order heterooligomers including a 4 alpha/HADHA and 4 beta/HADHB heterooligomer which physiological significance remains unclear. The mitochondrial trifunctional enzyme interacts with MTLN. Interacts with RSAD2/viperin. Acetylation of Lys-202 is observed in liver mitochondria from fasted mice but not from fed mice.

Its subcellular location is the mitochondrion. The protein resides in the mitochondrion inner membrane. It is found in the mitochondrion outer membrane. It localises to the endoplasmic reticulum. It carries out the reaction an acyl-CoA + acetyl-CoA = a 3-oxoacyl-CoA + CoA. The catalysed reaction is butanoyl-CoA + acetyl-CoA = 3-oxohexanoyl-CoA + CoA. It catalyses the reaction hexanoyl-CoA + acetyl-CoA = 3-oxooctanoyl-CoA + CoA. The enzyme catalyses octanoyl-CoA + acetyl-CoA = 3-oxodecanoyl-CoA + CoA. It carries out the reaction decanoyl-CoA + acetyl-CoA = 3-oxododecanoyl-CoA + CoA. The catalysed reaction is dodecanoyl-CoA + acetyl-CoA = 3-oxotetradecanoyl-CoA + CoA. It catalyses the reaction tetradecanoyl-CoA + acetyl-CoA = 3-oxohexadecanoyl-CoA + CoA. The protein operates within lipid metabolism; fatty acid beta-oxidation. Its function is as follows. Mitochondrial trifunctional enzyme catalyzes the last three of the four reactions of the mitochondrial beta-oxidation pathway. The mitochondrial beta-oxidation pathway is the major energy-producing process in tissues and is performed through four consecutive reactions breaking down fatty acids into acetyl-CoA. Among the enzymes involved in this pathway, the trifunctional enzyme exhibits specificity for long-chain fatty acids. Mitochondrial trifunctional enzyme is a heterotetrameric complex composed of two proteins, the trifunctional enzyme subunit alpha/HADHA carries the 2,3-enoyl-CoA hydratase and the 3-hydroxyacyl-CoA dehydrogenase activities, while the trifunctional enzyme subunit beta/HADHB described here bears the 3-ketoacyl-CoA thiolase activity. This Mus musculus (Mouse) protein is Trifunctional enzyme subunit beta, mitochondrial (Hadhb).